The following is a 196-amino-acid chain: Agamous-like MADS-box protein AGL70 (196 aa).

The 61-residue stretch at 1–61 folds into the MADS-box domain; it reads MGRRKVEIKR…GKLYDSASGD (61 aa). Positions 8–15 match the Nuclear localization signal motif; it reads IKRIENKS. Residues 80–170 enclose the K-box domain; it reads ALDLAEKIRN…ASQVGKKTFL (91 aa).

In terms of tissue distribution, mostly expressed in roots, leaves and flowers, and, to a lower extent, in inflorescence, siliques, pollen and shoots.

It localises to the nucleus. Its function is as follows. Probable transcription factor involved in the negative regulation of flowering time, probably through the photoperiodic and vernalization pathways; more efficient in cv. Landsberg erecta than in cv. Columbia background. Prevents premature flowering. Involved in the modulation of vernalization impact on flowering according to genotype acclimation to altitude. This chain is Agamous-like MADS-box protein AGL70, found in Arabidopsis thaliana (Mouse-ear cress).